We begin with the raw amino-acid sequence, 400 residues long: Acetate kinase (400 aa).

Mg(2+) is bound at residue asparagine 10. Lysine 17 contributes to the ATP binding site. Substrate is bound at residue arginine 91. Aspartate 150 functions as the Proton donor/acceptor in the catalytic mechanism. ATP contacts are provided by residues 210–214 (HLGNG), 285–287 (DCR), and 333–337 (GIGEN). Glutamate 387 is a binding site for Mg(2+).

This sequence belongs to the acetokinase family. In terms of assembly, homodimer. It depends on Mg(2+) as a cofactor. Mn(2+) serves as cofactor.

The protein localises to the cytoplasm. It catalyses the reaction acetate + ATP = acetyl phosphate + ADP. It participates in metabolic intermediate biosynthesis; acetyl-CoA biosynthesis; acetyl-CoA from acetate: step 1/2. Its function is as follows. Catalyzes the formation of acetyl phosphate from acetate and ATP. Can also catalyze the reverse reaction. This Yersinia pestis bv. Antiqua (strain Antiqua) protein is Acetate kinase.